The sequence spans 107 residues: Phosphoribosyl-ATP pyrophosphatase (107 aa).

It belongs to the PRA-PH family.

Its subcellular location is the cytoplasm. The enzyme catalyses 1-(5-phospho-beta-D-ribosyl)-ATP + H2O = 1-(5-phospho-beta-D-ribosyl)-5'-AMP + diphosphate + H(+). It participates in amino-acid biosynthesis; L-histidine biosynthesis; L-histidine from 5-phospho-alpha-D-ribose 1-diphosphate: step 2/9. In Caulobacter vibrioides (strain ATCC 19089 / CIP 103742 / CB 15) (Caulobacter crescentus), this protein is Phosphoribosyl-ATP pyrophosphatase (hisE).